Here is an 84-residue protein sequence, read N- to C-terminus: Delta-conotoxin-like MVIA (84 aa).

The first 22 residues, 1–22, serve as a signal peptide directing secretion; sequence MKLTCVMIVAVLFLTTWTFVTA. Residues 23-49 constitute a propeptide that is removed on maturation; the sequence is DDSRYGLKNLFPKARHEMKNPEASKLN. Cystine bridges form between C54/C69, C61/C73, and C68/C77. A 4-hydroxyproline modification is found at P65. S83 carries the post-translational modification Serine amide.

Belongs to the conotoxin O1 superfamily. Expressed by the venom duct.

Its subcellular location is the secreted. In terms of biological role, delta-conotoxins bind to site 6 of voltage-gated sodium channels (Nav) and inhibit the inactivation process. In Conus magus (Magical cone), this protein is Delta-conotoxin-like MVIA.